We begin with the raw amino-acid sequence, 201 residues long: ATP-dependent Clp protease proteolytic subunit (201 aa).

The active-site Nucleophile is the S98. The active site involves H123.

It belongs to the peptidase S14 family. In terms of assembly, fourteen ClpP subunits assemble into 2 heptameric rings which stack back to back to give a disk-like structure with a central cavity, resembling the structure of eukaryotic proteasomes.

It is found in the cytoplasm. It catalyses the reaction Hydrolysis of proteins to small peptides in the presence of ATP and magnesium. alpha-casein is the usual test substrate. In the absence of ATP, only oligopeptides shorter than five residues are hydrolyzed (such as succinyl-Leu-Tyr-|-NHMec, and Leu-Tyr-Leu-|-Tyr-Trp, in which cleavage of the -Tyr-|-Leu- and -Tyr-|-Trp bonds also occurs).. Functionally, cleaves peptides in various proteins in a process that requires ATP hydrolysis. Has a chymotrypsin-like activity. Plays a major role in the degradation of misfolded proteins. This chain is ATP-dependent Clp protease proteolytic subunit, found in Rickettsia conorii (strain ATCC VR-613 / Malish 7).